We begin with the raw amino-acid sequence, 477 residues long: Methylenetetrahydrofolate--tRNA-(uracil-5-)-methyltransferase TrmFO (477 aa).

15-20 contacts FAD; it reads GAGLAG.

This sequence belongs to the MnmG family. TrmFO subfamily. It depends on FAD as a cofactor.

It is found in the cytoplasm. The enzyme catalyses uridine(54) in tRNA + (6R)-5,10-methylene-5,6,7,8-tetrahydrofolate + NADH + H(+) = 5-methyluridine(54) in tRNA + (6S)-5,6,7,8-tetrahydrofolate + NAD(+). The catalysed reaction is uridine(54) in tRNA + (6R)-5,10-methylene-5,6,7,8-tetrahydrofolate + NADPH + H(+) = 5-methyluridine(54) in tRNA + (6S)-5,6,7,8-tetrahydrofolate + NADP(+). Catalyzes the folate-dependent formation of 5-methyl-uridine at position 54 (M-5-U54) in all tRNAs. The sequence is that of Methylenetetrahydrofolate--tRNA-(uracil-5-)-methyltransferase TrmFO from Nitrobacter winogradskyi (strain ATCC 25391 / DSM 10237 / CIP 104748 / NCIMB 11846 / Nb-255).